The following is an 871-amino-acid chain: MAKIRIHEIAKELGYDSKEIIEKANELGLGIKTASNAVEPEIAAAIYEYIQTREIPEAFKKNIKTPTAKKPKKENIKEQEKLNESEKKEPKKEEKLKQEVKKEELKIEKENAKEEEKQEIIDAHKPQSLASATLAKRRGLVIVKKKKDEEEIQVKKEEVKNSNDISINNEERLSLKTMFSNADESLKKKKKEKKSFVASKKESTEKMNFLDEHDFGDISLDDEDEVVLPDFSVKEQEKPQNINKKQPNFIRQAVGNSAGFGLEGGIQRRSRKKPSKKIEKKEVEEVGSVAISKEIRVYEFADKIGKSTSEVISKLFMLGMMTTKNDFLDEDAIEILAAEFGIEINIINEADEFDYVKDYEEETDEKDLVTRAPVITIMGHVDHGKTSLLDYIRKSRVASGEAGGITQHVGAYMVEKNGRKITFIDTPGHEAFTAMRARGASITDIVIIVVAADDGVKPQTKEAINHAKAAGVPIIIAINKMDKEAANPDMVKTQLAEMEIMPVEWGGSYEFVGVSAKTGMGIEDLLEIVLLQADILELKANPKSFAKASIIESSVQKGRGAAATIIVQNGTLTVGSTVVAGEAYGKVRAMSDDQGKALKEIKPGECGVIVGLSEVADAGEILIAVKTDKEAREYANKRHEYNRQKELSKSTKVSIDELGAKIKEGNLKALPVILKADVQGSLEALKASLEKLRNDEIKVNIIHSGVGGITQSDIELASASENSIVLGFNIRPTGEVKERSKDKGVEIKTYNVIYNLLDDVKALLGGMMSPIISEEQLGQAEIRQVINVPKIGQIAGCMVTEGVINRGAKIRLIRDGVVVYEGNVSSLKRFKDDAKEVAKGYECGVGIEGCDDMRVGDYIESYKEVEEQASL.

Disordered stretches follow at residues Lys60–Lys101 and Glu184–Ser203. The segment covering Lys61–Lys72 has biased composition (basic residues). The segment covering Lys73–Lys101 has biased composition (basic and acidic residues). The tr-type G domain maps to Thr370–Glu537. A G1 region spans residues Gly379–Thr386. Gly379–Thr386 contacts GTP. Residues Gly404 to His408 are G2. Residues Asp425 to Gly428 are G3. Residues Asp425 to His429 and Asn479 to Asp482 each bind GTP. The tract at residues Asn479–Asp482 is G4. Residues Ser515–Lys517 form a G5 region.

Belongs to the TRAFAC class translation factor GTPase superfamily. Classic translation factor GTPase family. IF-2 subfamily.

The protein localises to the cytoplasm. One of the essential components for the initiation of protein synthesis. Protects formylmethionyl-tRNA from spontaneous hydrolysis and promotes its binding to the 30S ribosomal subunits. Also involved in the hydrolysis of GTP during the formation of the 70S ribosomal complex. This chain is Translation initiation factor IF-2, found in Campylobacter jejuni subsp. jejuni serotype O:23/36 (strain 81-176).